Here is a 54-residue protein sequence, read N- to C-terminus: Large ribosomal subunit protein bL33B (54 aa).

The protein belongs to the bacterial ribosomal protein bL33 family.

The polypeptide is Large ribosomal subunit protein bL33B (Mycolicibacterium vanbaalenii (strain DSM 7251 / JCM 13017 / BCRC 16820 / KCTC 9966 / NRRL B-24157 / PYR-1) (Mycobacterium vanbaalenii)).